The chain runs to 392 residues: 4-hydroxybenzoate polyprenyltransferase, mitochondrial (392 aa).

The N-terminal 22 residues, 1-22, are a transit peptide targeting the mitochondrion; it reads MYALRHLRLQSARHFRSSYAAA. A run of 9 helical transmembrane segments spans residues 90-110, 115-135, 163-183, 184-204, 207-227, 236-256, 283-303, 307-327, and 339-359; these read IGTY…ADAG, LTML…GCTI, FDAI…LVQL, NWQS…YPLM, VTYW…LLGW, LAAC…YDTI, VWLS…GWAC, VPYY…IYSL, and FISN…GTLL. Residues 365–392 form a disordered region; that stretch reads KKQRQSSLTTSTASSYVPALPQKPEVLS. Positions 369 to 379 are enriched in polar residues; that stretch reads QSSLTTSTASS.

Belongs to the UbiA prenyltransferase family. Mg(2+) is required as a cofactor.

It is found in the mitochondrion inner membrane. It carries out the reaction an all-trans-polyprenyl diphosphate + 4-hydroxybenzoate = a 4-hydroxy-3-(all-trans-polyprenyl)benzoate + diphosphate. The protein operates within cofactor biosynthesis; ubiquinone biosynthesis. Its function is as follows. Catalyzes the prenylation of para-hydroxybenzoate (PHB) with an all-trans polyprenyl group. Mediates the second step in the final reaction sequence of coenzyme Q (CoQ) biosynthesis, which is the condensation of the polyisoprenoid side chain with PHB, generating the first membrane-bound Q intermediate. This Drosophila melanogaster (Fruit fly) protein is 4-hydroxybenzoate polyprenyltransferase, mitochondrial.